The chain runs to 344 residues: KRR1 small subunit processome component homolog (344 aa).

In terms of domain architecture, KH spans 125–193 (DIIKIGNLVH…VRDIVLETMN (69 aa)). Residues 232 to 245 (NISKRKQPKVKKQK) are compositionally biased toward basic residues. 2 disordered regions span residues 232–260 (NISK…ESKV) and 273–326 (QEQK…TKVD). A coiled-coil region spans residues 270 to 295 (FLNQEQKQAKRNQGRTEKQKEAAKRQ). 2 stretches are compositionally biased toward basic and acidic residues: residues 283–302 (GRTE…RNKD) and 315–326 (RKKEDGSSTKVD).

It belongs to the KRR1 family. As to quaternary structure, monomer. Component of the ribosomal small subunit (SSU) processome.

Its subcellular location is the nucleus. It localises to the nucleolus. In terms of biological role, required for 40S ribosome biogenesis. Involved in nucleolar processing of pre-18S ribosomal RNA and ribosome assembly. Binds to RNA. Required for female germline development, cell viability during eye development and for survival of dividing cells and epithelial cells during early wing disk development. The sequence is that of KRR1 small subunit processome component homolog from Drosophila yakuba (Fruit fly).